The primary structure comprises 376 residues: MAERCQRIDEEVVASRDEISSLPDDLLIQILLLVPIKDAVGTMILSKRWRYVWTLLPKLEYSDPGDECESVWKFLEKLLELHKAPFLETLCIQLDVGKLVANAVDRFVRKLELELHWTAEPTSLPKSLYTCKTLVELTLSDKIIVDVPSSVCLPSLNILRLFYVVFKDENSLERLISSCSVLARSKVGLAISDNRDYRFAKVHKLRLEKPHIDVVCHTDDKFLKAISLVTYLVLPLEDPMALDFRGFTFTRLGKLVICPHGHLWLDIIPLILNNSPKLRFLAITSVMDIDPEISHCHGTNQGTVPRCLSAHLDEEFVWHGYRGNEEETQLIRYIFANAKCLKKREISTFHLEEREVIETVLKSMPRVSTTSTLVFK.

The region spanning 16-75 is the F-box domain; sequence RDEISSLPDDLLIQILLLVPIKDAVGTMILSKRWRYVWTLLPKLEYSDPGDECESVWKFL. LRR repeat units lie at residues 131-154 and 199-224; these read CKTL…VCLP and FAKV…KFLK. The FBD domain maps to 296–348; the sequence is CHGTNQGTVPRCLSAHLDEEFVWHGYRGNEEETQLIRYIFANAKCLKKREIST.

The sequence is that of Putative F-box/FBD/LRR-repeat protein At5g52460 (EDA41) from Arabidopsis thaliana (Mouse-ear cress).